The sequence spans 237 residues: Ribonuclease 3 (237 aa).

Residues 3-133 (SRQPLLDALG…LLGAIYLQHG (131 aa)) enclose the RNase III domain. A Mg(2+)-binding site is contributed by Glu43. Asp47 is an active-site residue. The Mg(2+) site is built by Asp119 and Glu122. Glu122 is a catalytic residue. The 69-residue stretch at 160-228 (DWKTSLQELT…AAATWKALDV (69 aa)) folds into the DRBM domain.

Belongs to the ribonuclease III family. In terms of assembly, homodimer. The cofactor is Mg(2+).

Its subcellular location is the cytoplasm. The enzyme catalyses Endonucleolytic cleavage to 5'-phosphomonoester.. In terms of biological role, digests double-stranded RNA. Involved in the processing of primary rRNA transcript to yield the immediate precursors to the large and small rRNAs (23S and 16S). Processes some mRNAs, and tRNAs when they are encoded in the rRNA operon. Processes pre-crRNA and tracrRNA of type II CRISPR loci if present in the organism. In Mycolicibacterium paratuberculosis (strain ATCC BAA-968 / K-10) (Mycobacterium paratuberculosis), this protein is Ribonuclease 3.